The chain runs to 329 residues: MDPEQNAWTRRHMLGMDGLARHEIGAILDSAQAFRDVNYREIKKVPTLRGKTVINLFYENSTRTRTSFELAGKRMSADVINISASSSSAAKGETLLDTVATLQAMRPDVVVLRHGDSGAPHFLARHLDAGIINAGDGQHEHPTQSLLDLLTIQDHLEEMGKSSFEGMNVAICGDVLHSRVARSNAFALRTLGANVRFVGPPTLMPSEATKVFGVTVHHNMEEGLRGVDVIIMLRLQLERMTSAYLPSVREYFAYWGLTRGRLELTQPHALVMHPGPINRGVEIASDVADNPNRSVILEQVANGLAVRMAVLYHLCTGAARNSAQLGESL.

Residues arginine 63 and threonine 64 each coordinate carbamoyl phosphate. Lysine 91 is a binding site for L-aspartate. Residues arginine 113, histidine 141, and glutamine 144 each contribute to the carbamoyl phosphate site. L-aspartate is bound by residues arginine 179 and arginine 234. Positions 275 and 276 each coordinate carbamoyl phosphate.

Belongs to the aspartate/ornithine carbamoyltransferase superfamily. ATCase family. Heterododecamer (2C3:3R2) of six catalytic PyrB chains organized as two trimers (C3), and six regulatory PyrI chains organized as three dimers (R2).

It catalyses the reaction carbamoyl phosphate + L-aspartate = N-carbamoyl-L-aspartate + phosphate + H(+). The protein operates within pyrimidine metabolism; UMP biosynthesis via de novo pathway; (S)-dihydroorotate from bicarbonate: step 2/3. Catalyzes the condensation of carbamoyl phosphate and aspartate to form carbamoyl aspartate and inorganic phosphate, the committed step in the de novo pyrimidine nucleotide biosynthesis pathway. The protein is Aspartate carbamoyltransferase catalytic subunit of Magnetococcus marinus (strain ATCC BAA-1437 / JCM 17883 / MC-1).